Reading from the N-terminus, the 309-residue chain is Acetyl-coenzyme A carboxylase carboxyl transferase subunit beta (309 aa).

Positions 27–296 constitute a CoA carboxyltransferase N-terminal domain; it reads LWKKCPKCGA…PGTEAPIEFE (270 aa). 4 residues coordinate Zn(2+): cysteine 31, cysteine 34, cysteine 50, and cysteine 53. Residues 31 to 53 form a C4-type zinc finger; it reads CPKCGAFLYKPELEKNLDVCPKC. The tract at residues 288-309 is disordered; sequence GTEAPIEFEVTEKPDVDEPEGQ.

This sequence belongs to the AccD/PCCB family. In terms of assembly, acetyl-CoA carboxylase is a heterohexamer composed of biotin carboxyl carrier protein (AccB), biotin carboxylase (AccC) and two subunits each of ACCase subunit alpha (AccA) and ACCase subunit beta (AccD). Requires Zn(2+) as cofactor.

The protein resides in the cytoplasm. The enzyme catalyses N(6)-carboxybiotinyl-L-lysyl-[protein] + acetyl-CoA = N(6)-biotinyl-L-lysyl-[protein] + malonyl-CoA. Its pathway is lipid metabolism; malonyl-CoA biosynthesis; malonyl-CoA from acetyl-CoA: step 1/1. Its function is as follows. Component of the acetyl coenzyme A carboxylase (ACC) complex. Biotin carboxylase (BC) catalyzes the carboxylation of biotin on its carrier protein (BCCP) and then the CO(2) group is transferred by the transcarboxylase to acetyl-CoA to form malonyl-CoA. The chain is Acetyl-coenzyme A carboxylase carboxyl transferase subunit beta from Marinobacter nauticus (strain ATCC 700491 / DSM 11845 / VT8) (Marinobacter aquaeolei).